Reading from the N-terminus, the 68-residue chain is Tabimmunregulin 1 (68 aa).

A signal peptide spans 1–26 (MLLKSYVFFLLSLLIVGLFTSRDADA). The propeptide occupies 27-38 (QYEDLVTGYLRK).

In terms of tissue distribution, expressed in salivary glands.

It localises to the secreted. In terms of biological role, horsefly salivary gland immunosuppressant protein that likely inhibits the host inflammatory response by regulation of anti- and pro-inflammatory cytokines. When tested on mouse splenocytes in the presence of LPS, it increases the secretion of the proinflammatory cytokine interleukin-10 (IL10) and decreases the secretion of the proinflammatory cytokine interferon-gamma (IFNG) in a dose-dependent manner. This is Tabimmunregulin 1 from Tabanus yao (Horsefly).